The sequence spans 338 residues: Sesquiterpene synthase 1 (338 aa).

4 residues coordinate Mg(2+): Asp93, Asn228, Ser232, and Glu236. Residues 93 to 97 (DNISD) carry the DDXXD motif motif. The short motif at 228-236 (NDIFSYNVE) is the NSE/DTE motif element. Positions 316 and 317 each coordinate (2E,6E)-farnesyl diphosphate.

Belongs to the terpene synthase family. It depends on Mg(2+) as a cofactor.

The enzyme catalyses (2E,6E)-farnesyl diphosphate = alpha-copaene + diphosphate. It carries out the reaction (2E,6E)-farnesyl diphosphate = beta-copaene + diphosphate. The catalysed reaction is (2E,6E)-farnesyl diphosphate = alpha-muurolene + diphosphate. It catalyses the reaction (2E,6E)-farnesyl diphosphate = gamma-muurolene + diphosphate. The enzyme catalyses (2E,6E)-farnesyl diphosphate = delta-cadinene + diphosphate. In terms of biological role, terpene cyclase that catalyzes the cyclization of farnesyl diphosphate (FPP) to various sesquiterpenes, including alpha-copaene, beta-copaene, beta-elemene, alpha-muurolene, gamma-muurolene and delta-cadinene. The chain is Sesquiterpene synthase 1 from Postia placenta (strain ATCC 44394 / Madison 698-R) (Brown rot fungus).